Consider the following 334-residue polypeptide: tRNA uridine(34) hydroxylase (334 aa).

The region spanning 123 to 217 (SDPDVILVDT…YLEEVKAEES (95 aa)) is the Rhodanese domain. The active-site Cysteine persulfide intermediate is the cysteine 177.

It belongs to the TrhO family.

It carries out the reaction uridine(34) in tRNA + AH2 + O2 = 5-hydroxyuridine(34) in tRNA + A + H2O. Functionally, catalyzes oxygen-dependent 5-hydroxyuridine (ho5U) modification at position 34 in tRNAs. The chain is tRNA uridine(34) hydroxylase from Shewanella baltica (strain OS195).